The following is a 400-amino-acid chain: Acetate kinase (400 aa).

Position 10 (asparagine 10) interacts with Mg(2+). Lysine 17 contributes to the ATP binding site. Residue arginine 91 participates in substrate binding. Aspartate 150 (proton donor/acceptor) is an active-site residue. ATP contacts are provided by residues histidine 210–glycine 214, aspartate 285–arginine 287, and glycine 333–asparagine 337. Glutamate 387 serves as a coordination point for Mg(2+).

It belongs to the acetokinase family. As to quaternary structure, homodimer. Mg(2+) serves as cofactor. Requires Mn(2+) as cofactor.

The protein localises to the cytoplasm. It carries out the reaction acetate + ATP = acetyl phosphate + ADP. It participates in metabolic intermediate biosynthesis; acetyl-CoA biosynthesis; acetyl-CoA from acetate: step 1/2. Its function is as follows. Catalyzes the formation of acetyl phosphate from acetate and ATP. Can also catalyze the reverse reaction. In Yersinia pestis bv. Antiqua (strain Antiqua), this protein is Acetate kinase.